Here is a 67-residue protein sequence, read N- to C-terminus: Large ribosomal subunit protein uL29 (67 aa).

The protein belongs to the universal ribosomal protein uL29 family.

The sequence is that of Large ribosomal subunit protein uL29 (rpmC) from Halalkalibacterium halodurans (strain ATCC BAA-125 / DSM 18197 / FERM 7344 / JCM 9153 / C-125) (Bacillus halodurans).